The sequence spans 273 residues: MYRLAAFDMDGTLLMRDHKIGSITLNALHQLADAGVTLTFATGRHYLDMKGILSHSGLNGYLITGNGTRVCDAEGNPLYGMDLPAELVEFVLRTPWQTNASIHLFRDDGWFTDRNDPDLLIAHTTSGFHFQLTEWDELPLTGNHKFCFIVSHQELVELKAQLEQQMSGEADFCFSATDCLEVLPRGCNKGVALEKLSHHLDLTLADCMAFGDAMNDKEMLSRVGRGLVMGNALPQLKQELPQLQIIGRCEQQGVAHYLHHWLSSPHLTYSPEF.

Asp-8 functions as the Nucleophile in the catalytic mechanism. Residues Asp-8, Asp-10, and Asp-212 each coordinate Mg(2+).

Belongs to the HAD-like hydrolase superfamily. Cof family. Mg(2+) serves as cofactor.

It catalyses the reaction 4-amino-2-methyl-5-(diphosphooxymethyl)pyrimidine + H2O = 4-amino-2-methyl-5-(phosphooxymethyl)pyrimidine + phosphate + H(+). Functionally, catalyzes the hydrolysis of 4-amino-2-methyl-5-hydroxymethylpyrimidine pyrophosphate (HMP-PP) to 4-amino-2-methyl-5-hydroxymethylpyrimidine phosphate (HMP-P). The polypeptide is HMP-PP phosphatase (Yersinia pseudotuberculosis serotype I (strain IP32953)).